The sequence spans 193 residues: Oligoribonuclease (193 aa).

The Exonuclease domain maps to 8–171 (LVWLDLEMTG…EDIRESVAEL (164 aa)). Y129 is an active-site residue.

This sequence belongs to the oligoribonuclease family.

It is found in the cytoplasm. 3'-to-5' exoribonuclease specific for small oligoribonucleotides. This chain is Oligoribonuclease, found in Alkalilimnicola ehrlichii (strain ATCC BAA-1101 / DSM 17681 / MLHE-1).